A 1357-amino-acid chain; its full sequence is Kinectin (1357 aa).

At methionine 1 to serine 6 the chain is on the cytoplasmic side. Residues alanine 7 to methionine 29 traverse the membrane as a helical; Signal-anchor for type II membrane protein segment. Topologically, residues lysine 30 to glutamate 1357 are lumenal. 2 disordered regions span residues isoleucine 48–proline 81 and asparagine 103–threonine 218. Serine 75 is modified (phosphoserine; by FAM20C). Serine 77 carries the post-translational modification Phosphoserine. The segment covering glutamine 121–alanine 135 has biased composition (basic and acidic residues). Phosphothreonine is present on threonine 153. Serine 156 is subject to Phosphoserine. A compositionally biased stretch (basic residues) spans serine 161–lysine 171. Residues asparagine 172, asparagine 435, asparagine 772, asparagine 904, and asparagine 1055 are each glycosylated (N-linked (GlcNAc...) asparagine). The segment covering asparagine 172–glutamate 182 has biased composition (basic and acidic residues). Residues leucine 330–leucine 1356 are a coiled coil. Serine 1084 bears the Phosphoserine mark. Residues asparagine 1088 and asparagine 1263 are each glycosylated (N-linked (GlcNAc...) asparagine). A Phosphoserine modification is found at serine 1313. A glycan (N-linked (GlcNAc...) asparagine) is linked at asparagine 1329.

This sequence belongs to the kinectin family. In terms of assembly, parallel homodimers formed between the membrane-bound and the cytosolic form, and also between 2 cytosolic forms. As to expression, high levels in peripheral blood lymphocytes, testis and ovary, lower levels in spleen, thymus, prostate, small intestine and colon.

The protein localises to the endoplasmic reticulum membrane. Functionally, receptor for kinesin thus involved in kinesin-driven vesicle motility. Accumulates in integrin-based adhesion complexes (IAC) upon integrin aggregation by fibronectin. This chain is Kinectin (KTN1), found in Homo sapiens (Human).